A 208-amino-acid polypeptide reads, in one-letter code: ATP-dependent Clp protease proteolytic subunit (208 aa).

Catalysis depends on Ser106, which acts as the Nucleophile. Residue His131 is part of the active site.

It belongs to the peptidase S14 family. Fourteen ClpP subunits assemble into 2 heptameric rings which stack back to back to give a disk-like structure with a central cavity, resembling the structure of eukaryotic proteasomes.

The protein localises to the cytoplasm. The catalysed reaction is Hydrolysis of proteins to small peptides in the presence of ATP and magnesium. alpha-casein is the usual test substrate. In the absence of ATP, only oligopeptides shorter than five residues are hydrolyzed (such as succinyl-Leu-Tyr-|-NHMec, and Leu-Tyr-Leu-|-Tyr-Trp, in which cleavage of the -Tyr-|-Leu- and -Tyr-|-Trp bonds also occurs).. Functionally, cleaves peptides in various proteins in a process that requires ATP hydrolysis. Has a chymotrypsin-like activity. Plays a major role in the degradation of misfolded proteins. This chain is ATP-dependent Clp protease proteolytic subunit, found in Caulobacter sp. (strain K31).